A 293-amino-acid chain; its full sequence is Protease HtpX (293 aa).

2 consecutive transmembrane segments (helical) span residues 4–24 and 38–58; these read IGLFLLTNLAVLVVAGVVLSL and LTNLLIFCAVFGFVGSFISLF. His145 is a binding site for Zn(2+). Residue Glu146 is part of the active site. Residue His149 coordinates Zn(2+). The next 2 helical transmembrane spans lie at 156–176 and 193–213; these read ITLSLIQGVVNTFVMFFARII and IAFFITTIVAELVLGILASMI. Residue Glu222 coordinates Zn(2+).

Belongs to the peptidase M48B family. Zn(2+) is required as a cofactor.

Its subcellular location is the cell inner membrane. This Cellvibrio japonicus (strain Ueda107) (Pseudomonas fluorescens subsp. cellulosa) protein is Protease HtpX.